The chain runs to 460 residues: MRVAFIHPDLGIGGAERWVVDAAVGLQNLGHEVDIYTSYCNKSHCFDEVRDGLLKVTVLGDTICPHTIKGKFAIFCATFRQLHLAYELKKGPGSKVDVFVVDQLSACVPLLKLWFPKARVLFYGHFPDQLLVQNRNQMSLVKKAYRYPFDKFEEITTASADRLVVNSHFTKDMFEKTFPATKNPLVIYPCVDTDIKEQQQGLDRDMITAASQYTFLLSINRFERKKNILLAIEAFGEAQKKSSNLKLAVAGGYDFRVNENVEYLQELILACEKLKLSHISITADKYAKLLEKDTPAAVWTSIFKNDVIFFPSASNSFKNTLLHISKLLLYTPQNEHFGIVPLEGMLWKTPVLATNSGGPLETVKDNVGWTVEGKSELWAPVIDKVVHMNASDYAVLQTECVNWVNRFSQDTMASELEEAMEEVRKKAPTENVGWDYIRLGMWYSVLMTLTLSIVLLAIWP.

Asparagine 41 and asparagine 389 each carry an N-linked (GlcNAc...) asparagine glycan. Residues 439–459 form a helical membrane-spanning segment; the sequence is LGMWYSVLMTLTLSIVLLAIW.

It belongs to the glycosyltransferase group 1 family.

Its subcellular location is the endoplasmic reticulum membrane. It catalyses the reaction a beta-D-Man-(1-&gt;4)-beta-D-GlcNAc-(1-&gt;4)-alpha-D-GlcNAc-diphospho-di-trans,poly-cis-dolichol + GDP-alpha-D-mannose = an alpha-D-Man-(1-&gt;3)-beta-D-Man-(1-&gt;4)-beta-D-GlcNAc-(1-&gt;4)-alpha-D-GlcNAc-diphospho-di-trans,poly-cis-dolichol + GDP + H(+). It carries out the reaction an alpha-D-Man-(1-&gt;3)-beta-D-Man-(1-&gt;4)-beta-D-GlcNAc-(1-&gt;4)-alpha-D-GlcNAc-diphospho-di-trans,poly-cis-dolichol + GDP-alpha-D-mannose = an alpha-D-Man-(1-&gt;3)-[alpha-D-Man-(1-&gt;6)]-beta-D-Man-(1-&gt;4)-beta-D-GlcNAc-(1-&gt;4)-alpha-D-GlcNAc-diphospho-di-trans,poly-cis-dolichol + GDP + H(+). It participates in protein modification; protein glycosylation. Its function is as follows. Mannosylates Man(2)GlcNAc(2)-dolichol diphosphate and Man(1)GlcNAc(2)-dolichol diphosphate to form Man(3)GlcNAc(2)-dolichol diphosphate. The protein is Alpha-1,3/1,6-mannosyltransferase ALG2 (ALG2) of Yarrowia lipolytica (strain CLIB 122 / E 150) (Yeast).